The following is a 176-amino-acid chain: Prion-like protein doppel (176 aa).

Positions 1-25 (MRKHLSWWWLATVCMLLFSHLSAVQ) are cleaved as a signal peptide. The interval 27–50 (RGIKHRIKWNRKALPSTAQITEAQ) is flexible tail. O-linked (GalNAc...) threonine glycosylation is present at Thr-43. The globular stretch occupies residues 51–152 (VAENRPGAFI…KHCEFWLERG (102 aa)). Disulfide bonds link Cys-94/Cys-145 and Cys-108/Cys-140. Residues Asn-98 and Asn-110 are each glycosylated (N-linked (GlcNAc...) asparagine). The tract at residues 122-139 (KPDNKLHQQVLWRLVQEL) is cu(2+) binding. Residue Gly-152 is the site of GPI-anchor amidated glycine attachment. A propeptide spans 153-176 (AGLRVTMHQPVLLCLLALIWLTVK) (removed in mature form).

Belongs to the prion family. In terms of processing, N-glycosylated. N-glycosylated at two distinct sites. O-glycosylated. As to expression, expressed in testis, in Sertoli cells, ejaculated spermatozoa and in seminal fluid (at protein level).

Its subcellular location is the cell membrane. Its function is as follows. Required for normal acrosome reaction and for normal male fertility. Can bind Cu(2+). In Homo sapiens (Human), this protein is Prion-like protein doppel (PRND).